A 68-amino-acid polypeptide reads, in one-letter code: Protein transport protein Sec61 subunit gamma (68 aa).

Residues 1-32 (MDQFQALIEPARQFSKDSYRLVKRCTKPDRKE) are Cytoplasmic-facing. The chain crosses the membrane as a helical span at residues 33 to 61 (YQKIAMATAIGFAIMGFIGFFVKLIHIPI). At 62–68 (NNIIVGA) the chain is on the extracellular side.

The protein belongs to the SecE/SEC61-gamma family. As to quaternary structure, heterotrimeric complex composed of SEC61-alpha, SEC61-beta and SEC61-gamma. Expressed in the germline. Expression in the germline is regulated in a sex- and meiotic cycle stage-specific manner. Expressed in somatic tissues including the intestine and somatic gonad. Expressed in the intestine more highly in hermaprodites than in males. In hermaphrodites, weakly expressed in the spermatheca.

It localises to the endoplasmic reticulum membrane. Its function is as follows. Required for oocyte development and ovulation. Required for the translocation of secretory and transmembrane proteins into the endoplasmic reticulum in vitro. The sequence is that of Protein transport protein Sec61 subunit gamma from Caenorhabditis elegans.